The primary structure comprises 1045 residues: Protein phosphatase Slingshot (1045 aa).

The segment covering 1–20 has biased composition (polar residues); that stretch reads MALVTVQRSPSVAGSCSNSD. 4 disordered regions span residues 1 to 35, 58 to 80, 143 to 194, and 306 to 325; these read MALV…GNDR, TQSE…SNNS, KVGG…DNKN, and ESRR…EKEE. Over residues 66 to 80 the composition is skewed to low complexity; that stretch reads TDSTRSSNSTQSNNS. Positions 149–174 are enriched in polar residues; sequence GTKSSTSPAVPTQRQLSVEQTATEAS. Positions 175–185 are enriched in basic and acidic residues; sequence SKCDKTADKEN. Residues 324–379 form the DEK-C domain; the sequence is EETESVIKMKLKAIMMSVDLDEVTSKYIRGRLEEILDMDLGEYKSFIDAEMLVILG. The Tyrosine-protein phosphatase domain maps to 383–524; the sequence is APTKIFEHVY…LETYSGMLDA (142 aa). Cysteine 468 serves as the catalytic Phosphocysteine intermediate. Positions 529 to 547 are enriched in basic and acidic residues; that stretch reads EKLQRSKSETNLKSTKDAR. Disordered stretches follow at residues 529–631, 699–799, and 1001–1045; these read EKLQ…PERS, SHLG…GDNR, and ACSA…SDSS. Residues 560 to 569 are compositionally biased toward polar residues; that stretch reads ALNQAKSKST. Basic residues predominate over residues 586–601; sequence MHRRSIAQKSQRRMVR. A compositionally biased stretch (polar residues) spans 602–625; that stretch reads RSSSTSPKTQTAVVTKQQSQSMEN. Over residues 704–713 the composition is skewed to low complexity; sequence SVSGSSSGNI. Serine 719 carries the phosphoserine modification. Residues 721–732 show a composition bias toward low complexity; that stretch reads CSDVFSSQVDSV. Composition is skewed to polar residues over residues 764–774 and 1008–1021; these read TPQQQKQQSNA and KKTT…SSPV. Residues 1029–1045 are compositionally biased toward low complexity; it reads SAASNSNSSASNSSDSS.

Belongs to the protein-tyrosine phosphatase family. As to quaternary structure, interacts with actin.

The protein resides in the cytoplasm. It localises to the cytoskeleton. The catalysed reaction is O-phospho-L-tyrosyl-[protein] + H2O = L-tyrosyl-[protein] + phosphate. It carries out the reaction O-phospho-L-seryl-[protein] + H2O = L-seryl-[protein] + phosphate. It catalyses the reaction O-phospho-L-threonyl-[protein] + H2O = L-threonyl-[protein] + phosphate. Its function is as follows. Protein phosphatase which regulates actin filament dynamics. Dephosphorylates and activates the actin binding/depolymerizing factor tsr/cofilin, which subsequently binds to actin filaments and stimulates their disassembly. Required for axon growth. This Drosophila melanogaster (Fruit fly) protein is Protein phosphatase Slingshot (ssh).